A 309-amino-acid chain; its full sequence is Homoserine O-succinyltransferase (309 aa).

Cys142 serves as the catalytic Acyl-thioester intermediate. Substrate is bound by residues Lys163 and Ser192. The active-site Proton acceptor is the His235. Glu237 is a catalytic residue. Arg249 contributes to the substrate binding site.

Belongs to the MetA family. Homodimer.

The protein resides in the cytoplasm. The enzyme catalyses L-homoserine + succinyl-CoA = O-succinyl-L-homoserine + CoA. It functions in the pathway amino-acid biosynthesis; L-methionine biosynthesis via de novo pathway; O-succinyl-L-homoserine from L-homoserine: step 1/1. Transfers a succinyl group from succinyl-CoA to L-homoserine, forming succinyl-L-homoserine. The chain is Homoserine O-succinyltransferase from Escherichia coli O139:H28 (strain E24377A / ETEC).